The primary structure comprises 498 residues: Lycopene beta cyclase, chloroplastic/chromoplastic (498 aa).

A chloroplast and chromoplast-targeting transit peptide spans 1 to 79 (MDTLLRTPNN…ELPMYDPSKG (79 aa)). Position 84 to 112 (84 to 112 (LAVVGGGPAGLAVAQQVSEAGLSVCSIDP)) interacts with NAD(+). Residues 293 to 297 (FLEET) carry the FLEET motif motif.

This sequence belongs to the lycopene cyclase family. In terms of assembly, monomer. Requires FAD as cofactor. The cofactor is NADPH.

The protein localises to the plastid. It localises to the chloroplast. The protein resides in the chromoplast. The enzyme catalyses a carotenoid psi-end group = a carotenoid beta-end derivative. The catalysed reaction is all-trans-lycopene = gamma-carotene. It catalyses the reaction gamma-carotene = all-trans-beta-carotene. It carries out the reaction all-trans-neurosporene = beta-zeacarotene. The enzyme catalyses beta-zeacarotene = 7,8-dihydro-beta-carotene. It participates in carotenoid biosynthesis; beta-carotene biosynthesis. It functions in the pathway carotenoid biosynthesis; beta-zeacarotene biosynthesis. Its function is as follows. Catalyzes the double cyclization reaction which converts lycopene to beta-carotene. Catalyzes the double cyclization reaction which converts neurosporene to 7,8-dihydro-beta-carotene. This Capsicum annuum (Capsicum pepper) protein is Lycopene beta cyclase, chloroplastic/chromoplastic.